The following is a 352-amino-acid chain: MENGGRPSLCQFILLGTTSVVTAALYSVYRQKAWVSQELKGAKKVHLGEDLKSILSEAPGKCVPYAVIEGAVRSVKETLNSQFVENCKGVIQRLTLQEHKMVWNRTTHLWNDCSKIIHQRTNTVPFDLVPHEDGVDVAVRVLKPLDSVDLGLEAVYEKFHPSIQSFTDVIGHYISGERPKGIQETEEMLKVGATLTGVGELVLDNNSVRLQPPKQGMQYYLSSQDFDSLLQRQESSVRLWKVLALVFGFATCATLFFILRKQYLQRQERLRLKQMQEEFQEHEAQLLSRAKPEDRESLKSACVVCLSSFKSCVFLECGHVCSCTECYRALPEPKKCPICRQAITRVIPLYNS.

The Cytoplasmic portion of the chain corresponds to 1-8 (MENGGRPS). Residues 9–29 (LCQFILLGTTSVVTAALYSVY) traverse the membrane as a helical segment. Topologically, residues 30-238 (RQKAWVSQEL…LLQRQESSVR (209 aa)) are mitochondrial intermembrane. Residue Lys52 forms a Glycyl lysine isopeptide (Lys-Gly) (interchain with G-Cter in ubiquitin) linkage. A helical membrane pass occupies residues 239–259 (LWKVLALVFGFATCATLFFIL). The Cytoplasmic segment spans residues 260-352 (RKQYLQRQER…ITRVIPLYNS (93 aa)). Residues Lys273 and Lys299 each participate in a glycyl lysine isopeptide (Lys-Gly) (interchain with G-Cter in ubiquitin) cross-link. Residues 302–340 (CVVCLSSFKSCVFLECGHVCSCTECYRALPEPKKCPICR) form an RING-type zinc finger.

As to quaternary structure, homooligomer. Interacts with MAP3K7/TAK1. Interacts with UBC9. Interacts with and sumoylates DNM1L. Interacts with MAVS. Interacts with TP53 (via N-terminus); the interaction leads to ubiquitination and proteasomal degradation of TP53. Post-translationally, ubiquitinated by PRKN during mitophagy, leading to its degradation and enhancement of mitophagy. Deubiquitinated by USP30.

The protein localises to the mitochondrion outer membrane. Its subcellular location is the peroxisome. The catalysed reaction is S-ubiquitinyl-[E2 ubiquitin-conjugating enzyme]-L-cysteine + [acceptor protein]-L-lysine = [E2 ubiquitin-conjugating enzyme]-L-cysteine + N(6)-ubiquitinyl-[acceptor protein]-L-lysine.. Its pathway is protein modification; protein ubiquitination. It participates in protein modification; protein sumoylation. Its function is as follows. Exhibits weak E3 ubiquitin-protein ligase activity. E3 ubiquitin ligases accept ubiquitin from an E2 ubiquitin-conjugating enzyme in the form of a thioester and then directly transfer the ubiquitin to targeted substrates. Can ubiquitinate AKT1 preferentially at 'Lys-284' involving 'Lys-48'-linked polyubiquitination and seems to be involved in regulation of Akt signaling by targeting phosphorylated Akt to proteasomal degradation. Mediates polyubiquitination of cytoplasmic TP53 at 'Lys-24' which targets TP53 for proteasomal degradation, thus reducing TP53 levels in the cytoplasm and mitochondrion. Proposed to preferentially act as a SUMO E3 ligase at physiological concentrations. Plays a role in the control of mitochondrial morphology by promoting mitochondrial fragmentation, and influences mitochondrial localization. Likely to promote mitochondrial fission through negatively regulating the mitochondrial fusion proteins MFN1 and MFN2, acting in a pathway that is parallel to the PRKN/PINK1 regulatory pathway. May also be involved in the sumoylation of the membrane fission protein DNM1L. Inhibits cell growth. When overexpressed, activates JNK through MAP3K7/TAK1 and induces caspase-dependent apoptosis. Involved in the modulation of innate immune defense against viruses by inhibiting RIGI-dependent antiviral response. Can mediate RIGI sumoylation and disrupt its polyubiquitination. The sequence is that of Mitochondrial ubiquitin ligase activator of NFKB 1 (MUL1) from Macaca fascicularis (Crab-eating macaque).